The sequence spans 584 residues: J protein JJJ2 (584 aa).

The J domain occupies 13–77; it reads TYYSILGLTS…DQKLRYDRDL (65 aa). The disordered stretch occupies residues 216–312; it reads YSEDPNSCLG…FSSGSHDSNL (97 aa). The residue at position 229 (serine 229) is a Phosphoserine. The span at 241–253 shows a compositional bias: low complexity; it reads QQQQQQQQQQQQQ. Residues 269–282 show a composition bias toward basic and acidic residues; that stretch reads KDNKESKRESRVSP. Positions 299 to 312 are enriched in polar residues; sequence KTSTFSSGSHDSNL.

It is found in the cytoplasm. It localises to the nucleus. This is J protein JJJ2 (JJJ2) from Saccharomyces cerevisiae (strain YJM789) (Baker's yeast).